Consider the following 352-residue polypeptide: Uroporphyrinogen decarboxylase (352 aa).

Substrate contacts are provided by residues R26 to R30, F45, D76, Y153, S208, and H323.

It belongs to the uroporphyrinogen decarboxylase family. Homodimer.

The protein resides in the cytoplasm. It carries out the reaction uroporphyrinogen III + 4 H(+) = coproporphyrinogen III + 4 CO2. It functions in the pathway porphyrin-containing compound metabolism; protoporphyrin-IX biosynthesis; coproporphyrinogen-III from 5-aminolevulinate: step 4/4. In terms of biological role, catalyzes the decarboxylation of four acetate groups of uroporphyrinogen-III to yield coproporphyrinogen-III. The polypeptide is Uroporphyrinogen decarboxylase (Parasynechococcus marenigrum (strain WH8102)).